The primary structure comprises 571 residues: CDT1-like protein a, chloroplastic (571 aa).

A chloroplast-targeting transit peptide spans 1 to 79; sequence MSTPGSSRSI…GSRRRSEDPV (79 aa). Disordered stretches follow at residues 1–110 and 288–315; these read MSTP…EKEK and TTSSLAKPTSSQINIAPTPTKPTSTPAK. Polar residues predominate over residues 22 to 38; the sequence is SPSSKSQTGNPNPSSVA. The span at 81–96 shows a compositional bias: low complexity; sequence SSAKSRLFFDSSSSSP. Residues 288–302 are compositionally biased toward polar residues; that stretch reads TTSSLAKPTSSQINI. The segment covering 303–315 has biased composition (low complexity); that stretch reads APTPTKPTSTPAK.

Belongs to the Cdt1 family. In terms of assembly, binds to ARC6. Post-translationally, phosphorylated by cyclin D- and cyclin A-containing CDKA-1, and thus targeted to proteasome-mediated proteolysis. In terms of tissue distribution, expressed in proliferating (e.g. shoot and root apical meristems, organ primordia) and endoreplicating cells (e.g. guard cells and stomatal lineage, developing trichomes).

Its subcellular location is the plastid. The protein resides in the chloroplast. Functionally, member of the pre-replication complex. Component of the plastid division machinery. Promotes polyloidization and regulates endoreduplication. Involved in the coordination of cell and plastid division. The chain is CDT1-like protein a, chloroplastic (CDT1A) from Arabidopsis thaliana (Mouse-ear cress).